The following is a 232-amino-acid chain: Large ribosomal subunit protein uL1 (232 aa).

It belongs to the universal ribosomal protein uL1 family. As to quaternary structure, part of the 50S ribosomal subunit.

In terms of biological role, binds directly to 23S rRNA. The L1 stalk is quite mobile in the ribosome, and is involved in E site tRNA release. Protein L1 is also a translational repressor protein, it controls the translation of the L11 operon by binding to its mRNA. This is Large ribosomal subunit protein uL1 from Burkholderia lata (strain ATCC 17760 / DSM 23089 / LMG 22485 / NCIMB 9086 / R18194 / 383).